Consider the following 130-residue polypeptide: Serum amyloid A-4 protein (130 aa).

An N-terminal signal peptide occupies residues 1–18 (MRLATVIVLCSLFLGVSG). The tract at residues 109 to 130 (EEWGRSGKNPNHFRPEGLPEKF) is disordered. A compositionally biased stretch (basic and acidic residues) spans 121–130 (FRPEGLPEKF).

This sequence belongs to the SAA family. As to quaternary structure, apolipoprotein of the HDL complex. As to expression, expressed by the liver; secreted in plasma.

The protein localises to the secreted. In terms of biological role, major acute phase reactant. The polypeptide is Serum amyloid A-4 protein (Mus musculus (Mouse)).